Reading from the N-terminus, the 218-residue chain is Ribonuclease HII (218 aa).

Residues 13–202 (DLVAGVDEVG…VRAAHEARAT (190 aa)) form the RNase H type-2 domain. A divalent metal cation is bound by residues Asp19, Glu20, and Asp111.

This sequence belongs to the RNase HII family. It depends on Mn(2+) as a cofactor. Requires Mg(2+) as cofactor.

Its subcellular location is the cytoplasm. The catalysed reaction is Endonucleolytic cleavage to 5'-phosphomonoester.. Endonuclease that specifically degrades the RNA of RNA-DNA hybrids. The sequence is that of Ribonuclease HII from Pseudomonas syringae pv. syringae (strain B728a).